The sequence spans 330 residues: MKKSFIHQQEEISFVKNTFTQYLIAKLDVVEVQGPILSRVGDGMQDNLSGTENPVSVNVLKIPNATFEVVHSLAKWKRHTLARFGFNEGEGLVVNMKALRPDEDSLDQTHSVYVDQWDWEKVIPDGKRNLAYLKEAVETIYKVIRLTELAVEARYDIEAVLPKKITFIHTEELVAKYPDLTPKERENAITKEFGAVFLIGIGGVLPDGKPHDGRAPDYDDWTTETENGYHGLNGDILVWNGQLGSAFELSSMGIRVDEEALKRQVEMTGDQDRLAFDWHKSLLNGLFPLTIGGGIGQSRMVMFLLRKQHIGEVQTSVWPQEVRDSYDNIL.

It belongs to the class-II aminoacyl-tRNA synthetase family. AsnA subfamily.

It is found in the cytoplasm. It carries out the reaction L-aspartate + NH4(+) + ATP = L-asparagine + AMP + diphosphate + H(+). The protein operates within amino-acid biosynthesis; L-asparagine biosynthesis; L-asparagine from L-aspartate (ammonia route): step 1/1. This is Aspartate--ammonia ligase from Streptococcus pyogenes serotype M49 (strain NZ131).